We begin with the raw amino-acid sequence, 179 residues long: IMPACT family member in pol 5'region (179 aa).

It belongs to the IMPACT family.

This Thermus thermophilus protein is IMPACT family member in pol 5'region.